We begin with the raw amino-acid sequence, 345 residues long: tRNA-specific 2-thiouridylase MnmA (345 aa).

Residues 6–13 (LMSGGVDS) and leucine 32 each bind ATP. Cysteine 92 (nucleophile) is an active-site residue. Cysteine 92 and cysteine 191 form a disulfide bridge. Glycine 116 provides a ligand contact to ATP. The interaction with tRNA stretch occupies residues 138–140 (KDQ). Catalysis depends on cysteine 191, which acts as the Cysteine persulfide intermediate. The segment at 293–294 (RY) is interaction with tRNA.

This sequence belongs to the MnmA/TRMU family.

The protein localises to the cytoplasm. It catalyses the reaction S-sulfanyl-L-cysteinyl-[protein] + uridine(34) in tRNA + AH2 + ATP = 2-thiouridine(34) in tRNA + L-cysteinyl-[protein] + A + AMP + diphosphate + H(+). Its function is as follows. Catalyzes the 2-thiolation of uridine at the wobble position (U34) of tRNA, leading to the formation of s(2)U34. The sequence is that of tRNA-specific 2-thiouridylase MnmA from Helicobacter hepaticus (strain ATCC 51449 / 3B1).